Here is a 434-residue protein sequence, read N- to C-terminus: Methylenetetrahydrofolate--tRNA-(uracil-5-)-methyltransferase TrmFO (434 aa).

G9–G14 is an FAD binding site.

The protein belongs to the MnmG family. TrmFO subfamily. It depends on FAD as a cofactor.

The protein localises to the cytoplasm. It carries out the reaction uridine(54) in tRNA + (6R)-5,10-methylene-5,6,7,8-tetrahydrofolate + NADH + H(+) = 5-methyluridine(54) in tRNA + (6S)-5,6,7,8-tetrahydrofolate + NAD(+). It catalyses the reaction uridine(54) in tRNA + (6R)-5,10-methylene-5,6,7,8-tetrahydrofolate + NADPH + H(+) = 5-methyluridine(54) in tRNA + (6S)-5,6,7,8-tetrahydrofolate + NADP(+). Catalyzes the folate-dependent formation of 5-methyl-uridine at position 54 (M-5-U54) in all tRNAs. This Listeria monocytogenes serovar 1/2a (strain ATCC BAA-679 / EGD-e) protein is Methylenetetrahydrofolate--tRNA-(uracil-5-)-methyltransferase TrmFO.